Reading from the N-terminus, the 1431-residue chain is MDVTKKNKRDGTEVTERIVTEIVTTRLTSLPPKGSTSNGYAKTGSLGGGSRLEKQSLTHGSSGYINSSGSIRGNASTSSYRRAHSPASTLPNSPGSTFERKTHMTRHGTYEGSSSGNSSPEYPRKELASSATRGRSQTRESEIRVRLQSASPSTRWTELDEVKRLLKGSRSASASPTRNTSSTLPIPKKGTVETKMVTASSHSVSGTYDTTALDTNLPSHMWSSTLPAGSSMGTYHNNMTTQSSSLLNTNAYSAGSVFGMPNNMASCSPTLLPGLSSCSSVFGMQNNLAPSSSVPAHGTTTAPTAYGVKKNVPQPPTVTSTGVSTSATCTTSVQSDDLLHKDCKFLILEKDNVPSKKEMELLIMTKDSGKVFTASPASVSTTSFSEDTLKKEKQAAYAADACLKADINGDLNTVSTKGKATSVENHNYDRGGGSGGGARGGGGSGGGGGGGGTWGAAPAWCPCGSCCSWWKWLLGLLLTWLLLLGLLFGLIALAEEVRKLKARVDELERTRVQYFEDKTERSSKDRLLGDMPGVGPGLGKAELDGHSQEAIWLFVRNKLMTEQENGNLRGNPGPKGDMGSQGPKGDRGLPGTAGIPGPLGHPGPEGPKGQKGSIGDPGMEGPIGQRGLEGPMGPRGEPGPPGSGEKGDRGIAGEQGPRGLPGVPGSVGPRGPNGSPGPQGPPGSTGPQGLRGEVGLPGVKGDKGLAGPPGPKGDQGEKGPRGLTGEPGVRGLPGAVGEPGAKGAMGPAGPDGQQGPRGEQGLTGMPGTRGLPGPSGDPGKPGVTGPQGPQGLPGSPGRPGTKGEPGAPGRVMTAEGSSTITVPGPPGPPGAMGPPGPSGTPGPAGPAGLPGQTKAQRGEPGLAGDSFISSGSSISEVLAAQGVDLRGPLGPPGPRGPPGPSIPGPPGPRGPPGEGVPGPPGLPGSFLTDSETFFSGPPGPPGPPGPKGDQGDPGVPGTPGIPGGHSHGESSSTTYRQGPPGPPGPPGPPGSFSSSGQDIQRYIAEYMQSDSIRTYLSGVQGPPGPPGPPGPVITITGETFDYSQLASQVVSYLRTSGYGVSLSSASSEDILAMLRRNDVWQFLRQHLVGPPGPPGPPGVGGDGSLLSLDYGELSRHILNYMSSSGISFGHPGPPGPPGLPGTSYEELLTMLRGSDYRDIIGPPGPPGPPGPRGPPGVSAALATYAAENSDNFRSELIGYLTSPDVRSFIIGPPGPPGPQGPPGDSHLRDNYSWGSSSSARRGTAYSSSVGMGGANGGSLGEGRTFGTGDGGPYGTDIGPGGGYGAAAGGIYGTDGDSFRAGFTGDLDYNKLAVRVSESMQRQGLLQGMAYTVQGPPGVPGPQGPPGISKVFSAYSNVTQDLMDFFRTHGAIPGPPGQKGEAGTPGPKGDRGLAGQRGPPGPPGPRGQKGDKGDKGDQVYTGRRRRSIAIKP.

Residues 1 to 468 lie on the Cytoplasmic side of the membrane; the sequence is MDVTKKNKRD…AWCPCGSCCS (468 aa). Positions 1-569 are nonhelical region (NC16); sequence MDVTKKNKRD…MTEQENGNLR (569 aa). Disordered regions lie at residues 25-155, 167-188, 304-324, and 422-449; these read TRLT…PSTR, KGSR…PIPK, TAYG…TGVS, and SVEN…GGGG. The segment covering 60 to 74 has biased composition (low complexity); that stretch reads GSSGYINSSGSIRGN. 3 stretches are compositionally biased toward polar residues: residues 75–96, 111–120, and 170–184; these read ASTS…SPGS, EGSSSGNSSP, and RSAS…SSTL. Residues 146-231 form a necessary for interaction with DST and for the recruitment of DST to hemidesmosome region; it reads RLQSASPSTR…WSSTLPAGSS (86 aa). Residues 430–449 are compositionally biased toward gly residues; it reads RGGGSGGGARGGGGSGGGGG. Residues 469–489 form a helical; Signal-anchor for type II membrane protein membrane-spanning segment; it reads WWKWLLGLLLTWLLLLGLLFG. The Extracellular portion of the chain corresponds to 490 to 1431; the sequence is LIALAEEVRK…RRRRSIAIKP (942 aa). A Phosphoserine; by CK2 modification is found at Ser547. 4 disordered regions span residues 564-869, 884-996, 1158-1178, and 1208-1249; these read ENGN…SFIS, DLRG…SSSG, DIIG…PGVS, and FIIG…SSSV. A triple-helical region region spans residues 570–1417; it reads GNPGPKGDMG…KGDKGDKGDQ (848 aa). 3 stretches are compositionally biased toward low complexity: residues 657-673, 738-751, and 778-799; these read PRGL…RGPN, EPGA…AGPD, and PGKP…PGRP. 6 stretches are compositionally biased toward pro residues: residues 823–844, 889–911, 937–946, 979–989, 1162–1174, and 1212–1221; these read PGPP…PGPA, LGPP…PRGP, PPGPPGPPGP, PPGPPGPPGPP, PPGP…PRGP, and PPGPPGPQGP. Asn1230 carries an N-linked (GlcNAc...) asparagine glycan. Residues 1232–1249 show a composition bias toward polar residues; that stretch reads SWGSSSSARRGTAYSSSV. Asn1356 carries N-linked (GlcNAc...) asparagine glycosylation. The segment at 1366–1431 is disordered; the sequence is RTHGAIPGPP…RRRRSIAIKP (66 aa). Over residues 1407–1416 the composition is skewed to basic and acidic residues; sequence QKGDKGDKGD. The nonhelical region (NC1) stretch occupies residues 1418–1431; that stretch reads VYTGRRRRSIAIKP. The span at 1421–1431 shows a compositional bias: basic residues; it reads GRRRRSIAIKP.

Homotrimers of alpha 1(XVII)chains. Interacts (via cytoplasmic region) with ITGB4 (via cytoplasmic region). Interacts (via cytoplasmic region) with DST (via N-terminus). Interacts (via N-terminus) with PLEC. Interacts (via cytoplasmic region) with DSP. In terms of processing, the intracellular/endo domain is disulfide-linked. Prolines at the third position of the tripeptide repeating unit (G-X-Y) are hydroxylated in some or all of the chains. Post-translationally, the ectodomain is shedded from the surface of keratinocytes resulting in a 120-kDa soluble form, also named as 120 kDa linear IgA disease antigen homolog. The shedding is mediated by membrane-bound metalloproteases. This cleavage is inhibited by phosphorylation at Ser-547.

The protein localises to the cell junction. It localises to the hemidesmosome. The protein resides in the membrane. Its subcellular location is the secreted. It is found in the extracellular space. The protein localises to the extracellular matrix. It localises to the basement membrane. May play a role in the integrity of hemidesmosome and the attachment of basal keratinocytes to the underlying basement membrane. Functionally, the 120 kDa linear IgA disease antigen homolog is an anchoring filament component involved in dermal-epidermal cohesion. The polypeptide is Collagen alpha-1(XVII) chain (COL17A1) (Mesocricetus auratus (Golden hamster)).